Consider the following 181-residue polypeptide: uncharacterized protein (181 aa).

An N-terminal signal peptide occupies residues 1–23; the sequence is MKKCLLFLTTIALILSLSTNAFA.

This is an uncharacterized protein from Bacillus subtilis (strain 168).